The chain runs to 110 residues: Protein ripply3 (110 aa).

Residues 18–21 (WRPW) carry the WRPW motif motif. Positions 50 to 85 (HPVRLFLPRSRMQEYLSRLGSSVLASFPVQATLHFY) are ripply homology domain. Acidic residues predominate over residues 87-99 (DEDSSSEEEEDEE). The tract at residues 87–110 (DEDSSSEEEEDEEHANTRCRLWRP) is disordered.

Belongs to the ripply family.

The protein localises to the nucleus. Probable transcriptional regulator involved in developmental processes. The chain is Protein ripply3 (ripply3) from Danio rerio (Zebrafish).